The chain runs to 63 residues: Large ribosomal subunit protein bL28 (63 aa).

This sequence belongs to the bacterial ribosomal protein bL28 family.

The protein is Large ribosomal subunit protein bL28 of Thermomicrobium roseum (strain ATCC 27502 / DSM 5159 / P-2).